A 341-amino-acid chain; its full sequence is Ectoine-binding periplasmic protein TeaA (341 aa).

The first 25 residues, 1–25 (MKAYKLLTTASIGALMLGMSTAAYS), serve as a signal peptide directing secretion. Glu34, Arg169, Asn209, Trp213, and Phe234 together coordinate L-ectoine.

This sequence belongs to the bacterial solute-binding protein 7 family. As to quaternary structure, monomer. The complex comprises the extracytoplasmic solute receptor protein TeaA, and the two transmembrane proteins TeaB and TeaC.

The protein resides in the periplasm. Functionally, part of the tripartite ATP-independent periplasmic (TRAP) transport system TeaABC involved in the uptake of ectoine and hydroxyectoine in response to osmotic upshock. Probably functions as a recovery system for synthesized ectoine that leaks out of the cell. Binds ectoine with high affinity. Affinity for hydroxyectoine is approximately 20-fold lower. The chain is Ectoine-binding periplasmic protein TeaA (teaA) from Halomonas elongata (strain ATCC 33173 / DSM 2581 / NBRC 15536 / NCIMB 2198 / 1H9).